A 1203-amino-acid chain; its full sequence is MNTSEREPLLDTTTRNRVYDTTDNPSTKIMKREKDNPKAKTTSFNQGKLNIGEETCDLYAYKETIGRQILFWLLTIVTLGFYQLLAYWVKSLFVKVRFQPTSHDECEYVMVEDIHGTQTIKEVFKAESDVGLARPTRSGKQEKVKVMRFFTYRKIKYIWYEKDQEWLNPADMDSAAPFNIYQKLTLDVIGLKEQDVIASRKIYNMNALALALTPILVILFKEVLGPFYLFQCFSVALWYSDNYAYYASVIVIITVGSAAVAVYQMRAQEKRIRNMVGDTISVIVRRDGHDITIDASEIVPMDILILPSNTFILPCDCLLMNGTVIVNEAMLTGESVPVTKASLKEADECGPEIRLSSEHNRHTLFSGTTVLQTRNYKGQPVMARVIRTGFSTLKGQLVRSIMYPKPQEKEALKDVMVFILVLGFIALIGFIYTVIEMVSRGESLKHIIIRSLDIITIVVPPALPAAMSVGIINANSRLKKKKIFCTSPTTVNVCGLINVACFDKTGTLTEDGLDFNCLKAIRKNEDGKPEFTSEFEELDPVKLSAENANLNIVVAAASCHSLTRIDGTLHGDPLELILVEKSKWIIEEAVNSDEETQDFDTVQPTVLRPPPEQATYHPENNEYSVIKQHPFNSALQRMSVIISTPSEHSAHDMMVFTKGSPEMIASLCIPDTIPEDYMEVVDEYAQRGFRLIAVASKAVHLNFAKALKTPRDIMESELEFLGLIVMENRLKDVTLSVINELSVANIRCVMVTGDNLLTAMSVARECGIIRPTKKAFLITHSKTEKDPLGRTKLFIKESVSSSENDIDTDSEVRAFDRKAVLRTATYQMAIAGPTYSVITHEYPELVDRITAMCDVYARMAPDQKAQLIGALQEIGAKVSMCGDGANDCAALKAAHAGISLSQAEASIAAPFTSNVPDIRCVPTVIKEGRCALVTSYAVSKYMAAYSLNEFLSVMLLYNDGTNISDGQFLYIDLVLITLVALFLGNTEASRKLSGIPPPRRLATSAFYFSVFGQMFFNIITQTTGYLLVRGQSWYVPNPEELDNTTTMIGTTVFFTSCCMYLGYAFVYSKGHPYRRSVFTNWLLCGIIFVIGAINMVMIFTNMGFLMNLMGFVYVPSTSMRFILLAISLAGVFLSLLYEHFFVEKVVAIHFESYLRQRRLRNGDPSLSAYEKILAAIGSSPRWFEDEINLSKSIDRKETIESKC.

Topologically, residues 1-68 (MNTSEREPLL…YAYKETIGRQ (68 aa)) are cytoplasmic. A disordered region spans residues 21–42 (TTDNPSTKIMKREKDNPKAKTT). Residues 69–89 (ILFWLLTIVTLGFYQLLAYWV) form a helical membrane-spanning segment. The Extracellular portion of the chain corresponds to 90-209 (KSLFVKVRFQ…RKIYNMNALA (120 aa)). Residues 210–230 (LALTPILVILFKEVLGPFYLF) traverse the membrane as a helical segment. Residues 231-242 (QCFSVALWYSDN) lie on the Cytoplasmic side of the membrane. Residues 243–263 (YAYYASVIVIITVGSAAVAVY) traverse the membrane as a helical segment. Topologically, residues 264-297 (QMRAQEKRIRNMVGDTISVIVRRDGHDITIDASE) are extracellular. A helical transmembrane segment spans residues 298–318 (IVPMDILILPSNTFILPCDCL). Residues 319–414 (LMNGTVIVNE…KPQEKEALKD (96 aa)) are Cytoplasmic-facing. A helical membrane pass occupies residues 415 to 435 (VMVFILVLGFIALIGFIYTVI). Over 436-451 (EMVSRGESLKHIIIRS) the chain is Extracellular. Residues 452–472 (LDIITIVVPPALPAAMSVGII) form a helical membrane-spanning segment. Residues 473–935 (NANSRLKKKK…KEGRCALVTS (463 aa)) lie on the Cytoplasmic side of the membrane. Catalysis depends on Asp-503, which acts as the 4-aspartylphosphate intermediate. The disordered stretch occupies residues 595 to 617 (ETQDFDTVQPTVLRPPPEQATYH). Residues Asp-883 and Asp-887 each coordinate Mg(2+). The helical transmembrane segment at 936-956 (YAVSKYMAAYSLNEFLSVMLL) threads the bilayer. The Extracellular segment spans residues 957–962 (YNDGTN). A helical membrane pass occupies residues 963 to 983 (ISDGQFLYIDLVLITLVALFL). Residues 984-1007 (GNTEASRKLSGIPPPRRLATSAFY) are Cytoplasmic-facing. Residues 1008–1028 (FSVFGQMFFNIITQTTGYLLV) traverse the membrane as a helical segment. Residues 1029–1046 (RGQSWYVPNPEELDNTTT) lie on the Extracellular side of the membrane. Residues 1047–1067 (MIGTTVFFTSCCMYLGYAFVY) traverse the membrane as a helical segment. At 1068 to 1085 (SKGHPYRRSVFTNWLLCG) the chain is on the cytoplasmic side. A helical membrane pass occupies residues 1086–1106 (IIFVIGAINMVMIFTNMGFLM). The Extracellular segment spans residues 1107–1120 (NLMGFVYVPSTSMR). The helical transmembrane segment at 1121-1141 (FILLAISLAGVFLSLLYEHFF) threads the bilayer. Topologically, residues 1142–1203 (VEKVVAIHFE…DRKETIESKC (62 aa)) are cytoplasmic.

It belongs to the cation transport ATPase (P-type) (TC 3.A.3) family. Type V subfamily. In terms of tissue distribution, expressed in the 20 intestinal cells and in the excretory cell.

Its subcellular location is the apical cell membrane. The catalysed reaction is ATP + H2O = ADP + phosphate + H(+). Functionally, involved in the uptake and/or transport of polyamines, probably through ATP hydrolysis. This contributes to the maintenance of intracellular polyamine levels. Polyamines are essential for cell proliferation and are implicated in cellular processes, ranging from DNA replication to apoptosis. This Caenorhabditis elegans protein is Cation-transporting ATPase catp-5.